Consider the following 207-residue polypeptide: Zinc finger protein JAGGED-like (207 aa).

Positions 1–16 (MRADENNTLDLNNLPD) are enriched in low complexity. Positions 1–20 (MRADENNTLDLNNLPDDPSR) are disordered. The segment at 50–72 (YECRFCSLKFFKSQALGGHMNRH) adopts a C2H2-type zinc-finger fold.

In terms of tissue distribution, expressed in the emerging leaf, stamen and carpel primordia. Not expressed in the apical shoot meristem (SAM).

It is found in the nucleus. In terms of biological role, acts with JAG to promote growth and patterning in stamens and carpels. Promotes the growth of the abaxial and adaxial sides of floral organs. Promotes the growth of the pollen-bearing microsporangia in anthers, the carpel walls of the gynoecium and the establishment of the correct number of cell layers in carpel walls. Promotes leaf blade growth and trichome development. This chain is Zinc finger protein JAGGED-like (JGL), found in Arabidopsis thaliana (Mouse-ear cress).